Here is a 147-residue protein sequence, read N- to C-terminus: MWPPTSITPFNPFQIPLLNTIILISSGVSVTWAHHAIMENNNSQMTQGLFITIILGIYFTILQAYEYFEAPFTIADSIYGSTFFMATGFHGLHVIIGTLFLLICLIRHLNNHFSSNHHFGFEAAAWYWHFVDVVWLFLYISIYWWGN.

The next 4 membrane-spanning stretches (helical) occupy residues 13 to 33, 48 to 68, 83 to 103, and 125 to 145; these read FQIP…VTWA, GLFI…YEYF, FFMA…FLLI, and AWYW…IYWW.

This sequence belongs to the cytochrome c oxidase subunit 3 family. As to quaternary structure, component of the cytochrome c oxidase (complex IV, CIV), a multisubunit enzyme composed of a catalytic core of 3 subunits and several supernumerary subunits. The complex exists as a monomer or a dimer and forms supercomplexes (SCs) in the inner mitochondrial membrane with ubiquinol-cytochrome c oxidoreductase (cytochrome b-c1 complex, complex III, CIII).

Its subcellular location is the mitochondrion inner membrane. It catalyses the reaction 4 Fe(II)-[cytochrome c] + O2 + 8 H(+)(in) = 4 Fe(III)-[cytochrome c] + 2 H2O + 4 H(+)(out). Its function is as follows. Component of the cytochrome c oxidase, the last enzyme in the mitochondrial electron transport chain which drives oxidative phosphorylation. The respiratory chain contains 3 multisubunit complexes succinate dehydrogenase (complex II, CII), ubiquinol-cytochrome c oxidoreductase (cytochrome b-c1 complex, complex III, CIII) and cytochrome c oxidase (complex IV, CIV), that cooperate to transfer electrons derived from NADH and succinate to molecular oxygen, creating an electrochemical gradient over the inner membrane that drives transmembrane transport and the ATP synthase. Cytochrome c oxidase is the component of the respiratory chain that catalyzes the reduction of oxygen to water. Electrons originating from reduced cytochrome c in the intermembrane space (IMS) are transferred via the dinuclear copper A center (CU(A)) of subunit 2 and heme A of subunit 1 to the active site in subunit 1, a binuclear center (BNC) formed by heme A3 and copper B (CU(B)). The BNC reduces molecular oxygen to 2 water molecules using 4 electrons from cytochrome c in the IMS and 4 protons from the mitochondrial matrix. The polypeptide is Cytochrome c oxidase subunit 3 (COIII) (Spodoptera frugiperda (Fall armyworm)).